The chain runs to 83 residues: Cytochrome c6 (83 aa).

3 residues coordinate heme c: Cys14, Cys17, and His18. N6-methyllysine; partial is present on Lys24. Met59 contacts heme c.

The protein belongs to the cytochrome c family. PetJ subfamily. As to quaternary structure, monomer. Post-translationally, binds 1 heme c group covalently per subunit. 50% of the molecules were found to be monomethylated at Lys-24.

It is found in the plastid. The protein localises to the chloroplast thylakoid lumen. Functionally, functions as an electron carrier between membrane-bound cytochrome b6-f and photosystem I in oxygenic photosynthesis. The chain is Cytochrome c6 (petJ) from Diacronema lutheri (Unicellular marine alga).